The primary structure comprises 278 residues: Orotidine 5'-phosphate decarboxylase (278 aa).

Residues D40, 62–64 (KTH), 93–102 (DRKFADIGNT), Y223, and R242 contribute to the substrate site. Catalysis depends on K95, which acts as the Proton donor.

This sequence belongs to the OMP decarboxylase family.

The enzyme catalyses orotidine 5'-phosphate + H(+) = UMP + CO2. Its pathway is pyrimidine metabolism; UMP biosynthesis via de novo pathway; UMP from orotate: step 2/2. The chain is Orotidine 5'-phosphate decarboxylase (URA1) from Schizophyllum commune (Split gill fungus).